The sequence spans 252 residues: Hydroxyacylglutathione hydrolase (252 aa).

Zn(2+) contacts are provided by His-54, His-56, Asp-58, His-59, His-113, Asp-132, and His-170.

This sequence belongs to the metallo-beta-lactamase superfamily. Glyoxalase II family. Monomer. It depends on Zn(2+) as a cofactor.

The enzyme catalyses an S-(2-hydroxyacyl)glutathione + H2O = a 2-hydroxy carboxylate + glutathione + H(+). It functions in the pathway secondary metabolite metabolism; methylglyoxal degradation; (R)-lactate from methylglyoxal: step 2/2. Thiolesterase that catalyzes the hydrolysis of S-D-lactoyl-glutathione to form glutathione and D-lactic acid. This is Hydroxyacylglutathione hydrolase from Synechococcus sp. (strain JA-3-3Ab) (Cyanobacteria bacterium Yellowstone A-Prime).